The following is a 342-amino-acid chain: Protein RecA (342 aa).

ATP is bound at residue 65–72 (GPESSGKT).

This sequence belongs to the RecA family.

It localises to the cytoplasm. Its function is as follows. Can catalyze the hydrolysis of ATP in the presence of single-stranded DNA, the ATP-dependent uptake of single-stranded DNA by duplex DNA, and the ATP-dependent hybridization of homologous single-stranded DNAs. It interacts with LexA causing its activation and leading to its autocatalytic cleavage. The protein is Protein RecA of Caldanaerobacter subterraneus subsp. tengcongensis (strain DSM 15242 / JCM 11007 / NBRC 100824 / MB4) (Thermoanaerobacter tengcongensis).